The primary structure comprises 695 residues: Elongation factor G (695 aa).

A tr-type G domain is found at 12-286; it reads DKIRNIGIMA…AVIDYLPSPL (275 aa). Residues 21–28, 85–89, and 139–142 each bind GTP; these read AHIDAGKT, DTPGH, and NKMD.

The protein belongs to the TRAFAC class translation factor GTPase superfamily. Classic translation factor GTPase family. EF-G/EF-2 subfamily.

The protein localises to the cytoplasm. Catalyzes the GTP-dependent ribosomal translocation step during translation elongation. During this step, the ribosome changes from the pre-translocational (PRE) to the post-translocational (POST) state as the newly formed A-site-bound peptidyl-tRNA and P-site-bound deacylated tRNA move to the P and E sites, respectively. Catalyzes the coordinated movement of the two tRNA molecules, the mRNA and conformational changes in the ribosome. The protein is Elongation factor G of Thermotoga neapolitana (strain ATCC 49049 / DSM 4359 / NBRC 107923 / NS-E).